The chain runs to 206 residues: Protein-methionine-sulfoxide reductase heme-binding subunit MsrQ (206 aa).

Transmembrane regions (helical) follow at residues 14–34 (IKPL…WLGA), 45–65 (FLTR…LAIT), 82–102 (MCGL…VWWD), 118–138 (PFIT…ATST), 149–169 (WQTL…HFWW), and 179–199 (QPLL…AAWW).

The protein belongs to the MsrQ family. As to quaternary structure, heterodimer of a catalytic subunit (MsrP) and a heme-binding subunit (MsrQ). The cofactor is FMN. Heme b serves as cofactor.

Its subcellular location is the cell inner membrane. Its function is as follows. Part of the MsrPQ system that repairs oxidized periplasmic proteins containing methionine sulfoxide residues (Met-O), using respiratory chain electrons. Thus protects these proteins from oxidative-stress damage caused by reactive species of oxygen and chlorine generated by the host defense mechanisms. MsrPQ is essential for the maintenance of envelope integrity under bleach stress, rescuing a wide series of structurally unrelated periplasmic proteins from methionine oxidation. MsrQ provides electrons for reduction to the reductase catalytic subunit MsrP, using the quinone pool of the respiratory chain. This Bordetella pertussis (strain Tohama I / ATCC BAA-589 / NCTC 13251) protein is Protein-methionine-sulfoxide reductase heme-binding subunit MsrQ.